We begin with the raw amino-acid sequence, 239 residues long: DnaA regulatory inactivator Hda (239 aa).

The protein belongs to the DnaA family. HdA subfamily. The active form seems to be an ADP-bound monomer. Forms the RIDA complex (regulatory inactivation of DnaA) of ATP-DnaA, ADP-Hda and the DNA-loaded beta sliding clamp (dnaN).

Functionally, mediates the interaction of DNA replication initiator protein DnaA with DNA polymerase subunit beta sliding clamp (dnaN). Stimulates hydrolysis of ATP-DnaA to ADP-DnaA, rendering DnaA inactive for reinitiation, a process called regulatory inhibition of DnaA or RIDA. The protein is DnaA regulatory inactivator Hda of Yersinia enterocolitica serotype O:8 / biotype 1B (strain NCTC 13174 / 8081).